A 604-amino-acid polypeptide reads, in one-letter code: Elongation factor 4 (604 aa).

Residues 7–189 (SRLRNFCIIA…AVVDRIPPPA (183 aa)) enclose the tr-type G domain. Residues 19–24 (DHGKST) and 136–139 (NKID) each bind GTP.

The protein belongs to the TRAFAC class translation factor GTPase superfamily. Classic translation factor GTPase family. LepA subfamily.

The protein localises to the cell inner membrane. The catalysed reaction is GTP + H2O = GDP + phosphate + H(+). Its function is as follows. Required for accurate and efficient protein synthesis under certain stress conditions. May act as a fidelity factor of the translation reaction, by catalyzing a one-codon backward translocation of tRNAs on improperly translocated ribosomes. Back-translocation proceeds from a post-translocation (POST) complex to a pre-translocation (PRE) complex, thus giving elongation factor G a second chance to translocate the tRNAs correctly. Binds to ribosomes in a GTP-dependent manner. This Prochlorococcus marinus (strain MIT 9313) protein is Elongation factor 4.